We begin with the raw amino-acid sequence, 372 residues long: Glutamate 5-kinase (372 aa).

Lysine 14 is an ATP binding site. The substrate site is built by serine 54, aspartate 141, and asparagine 153. ATP is bound at residue 173 to 174 (TD). One can recognise a PUA domain in the interval 280-358 (RGTLVLDAGA…DAIESILGYS (79 aa)).

The protein belongs to the glutamate 5-kinase family.

It is found in the cytoplasm. The enzyme catalyses L-glutamate + ATP = L-glutamyl 5-phosphate + ADP. It participates in amino-acid biosynthesis; L-proline biosynthesis; L-glutamate 5-semialdehyde from L-glutamate: step 1/2. Catalyzes the transfer of a phosphate group to glutamate to form L-glutamate 5-phosphate. This chain is Glutamate 5-kinase, found in Pseudomonas putida (strain GB-1).